A 304-amino-acid polypeptide reads, in one-letter code: Nucleotide-binding protein ROP_69550 (304 aa).

24 to 31 is a binding site for ATP; sequence GLSGAGLQ. GTP is bound at residue 75–78; that stretch reads DVRS.

This sequence belongs to the RapZ-like family.

In terms of biological role, displays ATPase and GTPase activities. The polypeptide is Nucleotide-binding protein ROP_69550 (Rhodococcus opacus (strain B4)).